The primary structure comprises 212 residues: Probable NADH dehydrogenase [ubiquinone] iron-sulfur protein 8, mitochondrial (212 aa).

4Fe-4S ferredoxin-type domains are found at residues 104–133 (RRYP…IEAE) and 143–172 (TRYD…EGPN). [4Fe-4S] cluster contacts are provided by Cys-113, Cys-116, Cys-119, Cys-123, Cys-152, Cys-155, Cys-158, and Cys-162.

It belongs to the complex I 23 kDa subunit family. Complex I is composed of 45 different subunits This is a component of the iron-sulfur (IP) fragment of the enzyme. It depends on [4Fe-4S] cluster as a cofactor.

It localises to the mitochondrion. It catalyses the reaction a ubiquinone + NADH + 5 H(+)(in) = a ubiquinol + NAD(+) + 4 H(+)(out). Functionally, core subunit of the mitochondrial membrane respiratory chain NADH dehydrogenase (Complex I) that is believed to belong to the minimal assembly required for catalysis. Complex I functions in the transfer of electrons from NADH to the respiratory chain. The immediate electron acceptor for the enzyme is believed to be ubiquinone. The sequence is that of Probable NADH dehydrogenase [ubiquinone] iron-sulfur protein 8, mitochondrial from Caenorhabditis elegans.